The chain runs to 238 residues: MGRKWANIVAKKTAKDGATSKIYAKFGVEIYAAAKQGEPDPELNTSLKFVIERAKQAQVPKHVIDKAIDKAKGGGDETFVQGRYEGFGPNGSMIIAETLTSNVNRTIANVRTIFNKKGGNIGAAGSVSYMFDNTGVIVFKGTDPDHIFEILLEAEVDVRDVTEEEGNIVIYTEPTDLHKGIAALKAAGITEFSTTELEMIAQSEVELSPEDLEIFEGLVDALEDDDDVQKVYHNVANL.

This sequence belongs to the TACO1 family. YeeN subfamily.

It localises to the cytoplasm. This Escherichia coli (strain UTI89 / UPEC) protein is Probable transcriptional regulatory protein YeeN.